A 154-amino-acid chain; its full sequence is Glycosylation-dependent cell adhesion molecule 1 (154 aa).

Residues 1-18 (MKFLCILLLASLAATSLA) form the signal peptide. O-linked (GalNAc...) threonine; partial glycosylation is present at T34. A phosphoserine mark is found at S48, S53, S57, S59, and S65. A compositionally biased stretch (basic and acidic residues) spans 51 to 65 (DLSKEPSISREDLIS). Residues 51 to 115 (DLSKEPSISR…EHAPSDASTT (65 aa)) form a disordered region. The N-linked (GlcNAc...) asparagine glycan is linked to N96.

It belongs to the PP3/GlyCAM-1 family. As to expression, highly and specifically expressed in the lactating mammary gland.

It is found in the membrane. In Capra hircus (Goat), this protein is Glycosylation-dependent cell adhesion molecule 1 (GLYCAM1).